Consider the following 94-residue polypeptide: Cell division topological specificity factor (94 aa).

Belongs to the MinE family.

Functionally, prevents the cell division inhibition by proteins MinC and MinD at internal division sites while permitting inhibition at polar sites. This ensures cell division at the proper site by restricting the formation of a division septum at the midpoint of the long axis of the cell. This Alkalilimnicola ehrlichii (strain ATCC BAA-1101 / DSM 17681 / MLHE-1) protein is Cell division topological specificity factor.